We begin with the raw amino-acid sequence, 518 residues long: MKYKDLRDFIQRLEALGELRRVTQPVSPVLEMTELCDRVLRAGGPALLFEAPPGYAFPVLGNLFGTPRRVALGMGVDAGDDAALDSLRDLGRLLSALKEPDPPRSLKDAGKLLSLAKAVWDMAPKTVSSPPCQEIVWEGADVDLHKLPIQTCWPGDAGPLVTWGLTVTRGPNKPRQNLGIYRQQLIGRNKLIMRWLAHRGGALDFREFALKNPGKPYPVAVVLGADPATTLGAVTPVPDSLSEYQFAGLLRGSRTELAKCLTPGVDTLQVPARAEIVLEGFIYPQDGTPAPAPAGAPPRPAGQAAAAYEHALEGPYGDHTGYYNEQEWFPVFTVERITMRRDAIYHSTYTGKPPDEPAILGVALNEVFVPLLQKQFAEITDFYLPPEGCSYRMAIVQMKKSYAGHAKRVMFGVWSFLRQFMYTKFIVVVDEDVNIRDWKEVIWAITTRVDPVRDTVMVDNTPIDYLDFASPVAGLGSKMGLDATNKWPGETNREWGRPIEMDAKVKARVDRLWQDIGL.

Asn-177 is a binding site for Mn(2+). Prenylated FMN contacts are provided by residues 180–182 (IYR), 194–196 (RWL), and 199–200 (RG). Glu-243 lines the Mn(2+) pocket. The active-site Proton donor is the Asp-318.

The protein belongs to the UbiD family. In terms of assembly, homohexamer. It depends on prenylated FMN as a cofactor. Requires Mn(2+) as cofactor.

Its subcellular location is the cell membrane. The catalysed reaction is a 4-hydroxy-3-(all-trans-polyprenyl)benzoate + H(+) = a 2-(all-trans-polyprenyl)phenol + CO2. It participates in cofactor biosynthesis; ubiquinone biosynthesis. Catalyzes the decarboxylation of 3-octaprenyl-4-hydroxy benzoate to 2-octaprenylphenol, an intermediate step in ubiquinone biosynthesis. The sequence is that of 3-octaprenyl-4-hydroxybenzoate carboxy-lyase from Burkholderia multivorans (strain ATCC 17616 / 249).